Here is a 63-residue protein sequence, read N- to C-terminus: Large ribosomal subunit protein bL32 (63 aa).

The interval 1–20 (MANPKAKMSKSRRDKRRAQF) is disordered. Over residues 7-18 (KMSKSRRDKRRA) the composition is skewed to basic residues.

Belongs to the bacterial ribosomal protein bL32 family.

This is Large ribosomal subunit protein bL32 from Chlorobaculum parvum (strain DSM 263 / NCIMB 8327) (Chlorobium vibrioforme subsp. thiosulfatophilum).